The primary structure comprises 380 residues: Queuine tRNA-ribosyltransferase (380 aa).

Aspartate 96 functions as the Proton acceptor in the catalytic mechanism. Substrate-binding positions include 96–100 (DSGGF), aspartate 150, glutamine 193, and glycine 220. The segment at 251–257 (GVGAPDS) is RNA binding. The active-site Nucleophile is the aspartate 270. Residues 275–279 (TRIAR) form an RNA binding; important for wobble base 34 recognition region. 4 residues coordinate Zn(2+): cysteine 308, cysteine 310, cysteine 313, and histidine 339.

The protein belongs to the queuine tRNA-ribosyltransferase family. As to quaternary structure, homodimer. Within each dimer, one monomer is responsible for RNA recognition and catalysis, while the other monomer binds to the replacement base PreQ1. The cofactor is Zn(2+).

The enzyme catalyses 7-aminomethyl-7-carbaguanine + guanosine(34) in tRNA = 7-aminomethyl-7-carbaguanosine(34) in tRNA + guanine. It participates in tRNA modification; tRNA-queuosine biosynthesis. In terms of biological role, catalyzes the base-exchange of a guanine (G) residue with the queuine precursor 7-aminomethyl-7-deazaguanine (PreQ1) at position 34 (anticodon wobble position) in tRNAs with GU(N) anticodons (tRNA-Asp, -Asn, -His and -Tyr). Catalysis occurs through a double-displacement mechanism. The nucleophile active site attacks the C1' of nucleotide 34 to detach the guanine base from the RNA, forming a covalent enzyme-RNA intermediate. The proton acceptor active site deprotonates the incoming PreQ1, allowing a nucleophilic attack on the C1' of the ribose to form the product. After dissociation, two additional enzymatic reactions on the tRNA convert PreQ1 to queuine (Q), resulting in the hypermodified nucleoside queuosine (7-(((4,5-cis-dihydroxy-2-cyclopenten-1-yl)amino)methyl)-7-deazaguanosine). This is Queuine tRNA-ribosyltransferase from Streptococcus thermophilus (strain ATCC BAA-250 / LMG 18311).